The following is a 310-amino-acid chain: UDP-N-acetylenolpyruvoylglucosamine reductase (310 aa).

One can recognise an FAD-binding PCMH-type domain in the interval Arg30 to Gly200. The active site involves Arg179. Residue Ser230 is the Proton donor of the active site. Glu300 is a catalytic residue.

This sequence belongs to the MurB family. The cofactor is FAD.

Its subcellular location is the cytoplasm. The catalysed reaction is UDP-N-acetyl-alpha-D-muramate + NADP(+) = UDP-N-acetyl-3-O-(1-carboxyvinyl)-alpha-D-glucosamine + NADPH + H(+). The protein operates within cell wall biogenesis; peptidoglycan biosynthesis. Functionally, cell wall formation. This chain is UDP-N-acetylenolpyruvoylglucosamine reductase, found in Synechococcus sp. (strain WH7803).